The primary structure comprises 58 residues: Large ribosomal subunit protein bL32 (58 aa).

Belongs to the bacterial ribosomal protein bL32 family.

The polypeptide is Large ribosomal subunit protein bL32 (Prochlorococcus marinus (strain MIT 9515)).